The primary structure comprises 149 residues: Large ribosomal subunit protein bL9 (149 aa).

It belongs to the bacterial ribosomal protein bL9 family.

Functionally, binds to the 23S rRNA. In Mycoplasma pneumoniae (strain ATCC 29342 / M129 / Subtype 1) (Mycoplasmoides pneumoniae), this protein is Large ribosomal subunit protein bL9.